A 376-amino-acid chain; its full sequence is Mitogen-activated protein kinase 6 (376 aa).

The region spanning 43–329 (APPIRPIGRG…VDEALHHPYL (287 aa)) is the Protein kinase domain. ATP contacts are provided by residues 49–57 (IGRGAYGIV) and lysine 72. Aspartate 169 acts as the Proton acceptor in catalysis. The residue at position 201 (threonine 201) is a Phosphothreonine. The TXY motif lies at 201–203 (TEY). Tyrosine 203 carries the phosphotyrosine modification.

It belongs to the protein kinase superfamily. CMGC Ser/Thr protein kinase family. MAP kinase subfamily. Post-translationally, dually phosphorylated on Thr-201 and Tyr-203, which activates the enzyme.

The catalysed reaction is L-seryl-[protein] + ATP = O-phospho-L-seryl-[protein] + ADP + H(+). It catalyses the reaction L-threonyl-[protein] + ATP = O-phospho-L-threonyl-[protein] + ADP + H(+). With respect to regulation, activated by threonine and tyrosine phosphorylation. This Oryza sativa subsp. japonica (Rice) protein is Mitogen-activated protein kinase 6 (MPK6).